A 280-amino-acid polypeptide reads, in one-letter code: Probable endonuclease 4 (280 aa).

9 residues coordinate Zn(2+): histidine 69, histidine 109, glutamate 145, aspartate 179, histidine 182, histidine 216, aspartate 229, histidine 231, and glutamate 261.

The protein belongs to the AP endonuclease 2 family. Zn(2+) is required as a cofactor.

The enzyme catalyses Endonucleolytic cleavage to 5'-phosphooligonucleotide end-products.. In terms of biological role, endonuclease IV plays a role in DNA repair. It cleaves phosphodiester bonds at apurinic or apyrimidinic (AP) sites, generating a 3'-hydroxyl group and a 5'-terminal sugar phosphate. In Aliarcobacter butzleri (strain RM4018) (Arcobacter butzleri), this protein is Probable endonuclease 4.